Here is a 408-residue protein sequence, read N- to C-terminus: Aspartate aminotransferase, cytoplasmic (408 aa).

Residues G36, W133, and N187 each coordinate L-aspartate. Residue K251 is modified to N6-(pyridoxal phosphate)lysine. Residue R379 participates in L-aspartate binding.

This sequence belongs to the class-I pyridoxal-phosphate-dependent aminotransferase family. Homodimer. The cofactor is pyridoxal 5'-phosphate. As to expression, expressed in all somatic tissues including the nervous system.

The protein localises to the cytoplasm. It catalyses the reaction L-aspartate + 2-oxoglutarate = oxaloacetate + L-glutamate. Biosynthesis of L-glutamate from L-aspartate. Important regulator of levels of glutamate, the major excitatory neurotransmitter of the central nervous system. The sequence is that of Aspartate aminotransferase, cytoplasmic from Caenorhabditis elegans.